The primary structure comprises 303 residues: Pyridoxal 5'-phosphate synthase subunit PdxS (303 aa).

Asp-33 contacts D-ribose 5-phosphate. Lys-90 (schiff-base intermediate with D-ribose 5-phosphate) is an active-site residue. Gly-162 is a D-ribose 5-phosphate binding site. A D-glyceraldehyde 3-phosphate-binding site is contributed by Arg-174. Residues Gly-223 and 244-245 (GS) contribute to the D-ribose 5-phosphate site.

The protein belongs to the PdxS/SNZ family. As to quaternary structure, in the presence of PdxT, forms a dodecamer of heterodimers.

The enzyme catalyses aldehydo-D-ribose 5-phosphate + D-glyceraldehyde 3-phosphate + L-glutamine = pyridoxal 5'-phosphate + L-glutamate + phosphate + 3 H2O + H(+). It participates in cofactor biosynthesis; pyridoxal 5'-phosphate biosynthesis. Functionally, catalyzes the formation of pyridoxal 5'-phosphate from ribose 5-phosphate (RBP), glyceraldehyde 3-phosphate (G3P) and ammonia. The ammonia is provided by the PdxT subunit. Can also use ribulose 5-phosphate and dihydroxyacetone phosphate as substrates, resulting from enzyme-catalyzed isomerization of RBP and G3P, respectively. This chain is Pyridoxal 5'-phosphate synthase subunit PdxS, found in Mycolicibacterium smegmatis (strain ATCC 700084 / mc(2)155) (Mycobacterium smegmatis).